We begin with the raw amino-acid sequence, 59 residues long: Large ribosomal subunit protein bL32c (59 aa).

The protein belongs to the bacterial ribosomal protein bL32 family.

It localises to the plastid. It is found in the chloroplast. The polypeptide is Large ribosomal subunit protein bL32c (Physcomitrium patens (Spreading-leaved earth moss)).